We begin with the raw amino-acid sequence, 38 residues long: Conotoxin r7a (38 aa).

Positions 1–5 are excised as a propeptide; that stretch reads APAKR. Trp-6 is subject to 6'-bromotryptophan. A 4-carboxyglutamate mark is found at Glu-10 and Glu-11. Cystine bridges form between Cys-12/Cys-26, Cys-19/Cys-30, and Cys-25/Cys-35. Trp-15 is modified (6'-bromotryptophan). 2 positions are modified to 4-carboxyglutamate: Glu-20 and Glu-31. At Trp-38 the chain carries 6'-bromotryptophan.

It belongs to the conotoxin O2 superfamily. In terms of tissue distribution, expressed by the venom duct.

It localises to the secreted. In terms of biological role, induces a sleep-like state in mice. The protein is Conotoxin r7a of Conus radiatus (Rayed cone).